The primary structure comprises 431 residues: 3'3'-cGAMP-specific phosphodiesterase 1 (431 aa).

Positions 39–155 (DINHGHRVGY…IFLADRVDYL (117 aa)) constitute an HD domain. One can recognise an HD-GYP domain in the interval 231 to 427 (GVEEIMSIAM…YYQLSIAESP (197 aa)). Residues His288 and Asp289 each coordinate a divalent metal cation. Lys292 functions as the Proton donor in the catalytic mechanism. 4 residues coordinate a divalent metal cation: His317, His341, His342, and Asp370.

In terms of assembly, monomer. Ca(2+) is required as a cofactor. Mg(2+) serves as cofactor.

The enzyme catalyses 3',3'-cGAMP + H2O = 5'-pApG-3' + H(+). The catalysed reaction is 5'-pApG-3' + H2O = 5'-ApG-3' + phosphate. In terms of biological role, phosphodiesterase (PDE) that catalyzes the hydrolysis of 3'3'-cyclic GMP-AMP (3'3'-cGAMP), leading to linear 5'-pApG. Also displays 5'-nucleotidase activity, further hydrolyzing 5'-pApG to 5'-ApG. Counteracts the function of the 3'3'-cGAMP synthase DncV, and is involved in the modulation of intracellular 3'3'-cGAMP levels. Enhances bacterial chemotaxis and inhibits intestinal colonization in vivo. Thus exerts a crucial role in regulating bacterial infectivity through catalyzing 3'3'-cGAMP degradation. Is specific for 3'3'-cGAMP since it cannot degrade other cGAMP linkage isomers (3'2'-, 2'3'-, and 2'2'-cGAMPs). Is also able to hydrolyze c-di-GMP but not c-di-AMP. The chain is 3'3'-cGAMP-specific phosphodiesterase 1 from Vibrio cholerae serotype O1 (strain ATCC 39315 / El Tor Inaba N16961).